A 207-amino-acid chain; its full sequence is MSAFNLSAIAFILAAIGLVVFMLVVPRLLGGRSHGSQKEEIFEAGVVGSGNARIRLSAKFYLVAIFFVIFDLEALYLYAYAVSVREAGWLGFAAAAIFITILIIGLVYELSLGAMNWAPADKLRKKARLYAAPAGFSLADITKFDGVDELMVDPTGKIPAQSSGQINVSNNIETNRRHLQNIDHINTTGNVTSVDFATSAQTDKMTR.

3 consecutive transmembrane segments (helical) span residues 6–26, 62–82, and 87–107; these read LSAI…LVVP, LVAI…AYAV, and AGWL…IGLV.

The protein belongs to the complex I subunit 3 family. In terms of assembly, NDH-1 is composed of 14 different subunits. Subunits NuoA, H, J, K, L, M, N constitute the membrane sector of the complex.

It is found in the cell inner membrane. It carries out the reaction a quinone + NADH + 5 H(+)(in) = a quinol + NAD(+) + 4 H(+)(out). Functionally, NDH-1 shuttles electrons from NADH, via FMN and iron-sulfur (Fe-S) centers, to quinones in the respiratory chain. The immediate electron acceptor for the enzyme in this species is believed to be ubiquinone. Couples the redox reaction to proton translocation (for every two electrons transferred, four hydrogen ions are translocated across the cytoplasmic membrane), and thus conserves the redox energy in a proton gradient. This Psychrobacter cryohalolentis (strain ATCC BAA-1226 / DSM 17306 / VKM B-2378 / K5) protein is NADH-quinone oxidoreductase subunit A.